We begin with the raw amino-acid sequence, 585 residues long: A-type ATP synthase subunit A (585 aa).

An ATP-binding site is contributed by 231–238; the sequence is GPFGSGKT.

This sequence belongs to the ATPase alpha/beta chains family. Has multiple subunits with at least A(3), B(3), C, D, E, F, H, I and proteolipid K(x).

The protein resides in the cell membrane. The catalysed reaction is ATP + H2O + 4 H(+)(in) = ADP + phosphate + 5 H(+)(out). Its function is as follows. Produces ATP from ADP in the presence of a proton gradient across the membrane. The archaeal alpha chain is a catalytic subunit. Functionally, component of the A-type ATP synthase that produces ATP from ADP in the presence of a proton gradient across the membrane. The A chain is the catalytic subunit. The protein is A-type ATP synthase subunit A of Thermococcus sp. (strain KI).